Consider the following 88-residue polypeptide: Small ribosomal subunit protein uS15 (88 aa).

The protein belongs to the universal ribosomal protein uS15 family. As to quaternary structure, part of the 30S ribosomal subunit. Forms a bridge to the 50S subunit in the 70S ribosome, contacting the 23S rRNA.

One of the primary rRNA binding proteins, it binds directly to 16S rRNA where it helps nucleate assembly of the platform of the 30S subunit by binding and bridging several RNA helices of the 16S rRNA. Functionally, forms an intersubunit bridge (bridge B4) with the 23S rRNA of the 50S subunit in the ribosome. The polypeptide is Small ribosomal subunit protein uS15 (Geotalea uraniireducens (strain Rf4) (Geobacter uraniireducens)).